We begin with the raw amino-acid sequence, 176 residues long: HTH-type transcriptional regulator DctR (176 aa).

The 66-residue stretch at 109–174 folds into the HTH luxR-type domain; sequence VPEANVSLSR…ELVRHQHIDY (66 aa). A DNA-binding region (H-T-H motif) is located at residues 133-152; that stretch reads TEDILEKLKISLKTFYCHKH.

Its function is as follows. May act as a transcriptional regulator of dctA. Could be involved in the regulation of the genes coding for the type III secretion system in enterohaemorragic strains. This is HTH-type transcriptional regulator DctR (dctR) from Escherichia coli O157:H7.